Consider the following 191-residue polypeptide: Adenylate kinase (191 aa).

10 to 15 lines the ATP pocket; sequence GAGKGT. Residues 30–59 are NMP; it reads STGDIFRANVTEGTPLGVEAKRYMDAGEYV. AMP-binding positions include Thr31, Arg36, 57–59, 85–88, and Gln92; these read EYV and GYPR. The LID stretch occupies residues 126–136; the sequence is QRAQVEGRADD. Position 127 (Arg127) interacts with ATP. AMP contacts are provided by Arg133 and Arg144. Gly172 is an ATP binding site.

It belongs to the adenylate kinase family. Monomer.

Its subcellular location is the cytoplasm. It catalyses the reaction AMP + ATP = 2 ADP. The protein operates within purine metabolism; AMP biosynthesis via salvage pathway; AMP from ADP: step 1/1. Catalyzes the reversible transfer of the terminal phosphate group between ATP and AMP. Plays an important role in cellular energy homeostasis and in adenine nucleotide metabolism. In Nocardioides sp. (strain ATCC BAA-499 / JS614), this protein is Adenylate kinase.